Consider the following 748-residue polypeptide: Cysteine--tRNA ligase, cytoplasmic (748 aa).

Residues 1 to 25 (MADSSGQQGKGRRVQPQWSPPAGTQ) are disordered. At Ala-2 the chain carries N-acetylalanine. Ser-19 carries the phosphoserine modification. A Zn(2+)-binding site is contributed by Cys-55. Gly-56 is a binding site for L-cysteine. The 'HIGH' region motif lies at 57-67 (PTVYDASHMGH). Arg-79 carries the post-translational modification Phosphoserine. Residue Thr-96 coordinates L-cysteine. A 'KIIK' region motif is present at residues 101 to 104 (KIIK). 2 positions are modified to phosphoserine: Ser-305 and Ser-307. The Zn(2+) site is built by Cys-348, His-373, and Glu-377. His-373 contributes to the L-cysteine binding site. Positions 406–410 (KMSKS) match the 'KMSKS' region motif. ATP is bound at residue Lys-409. Residue Lys-503 is modified to N6-acetyllysine. Over residues 653–679 (EKRRVEEEKRKKKEEAARRKQEQEAAK) the composition is skewed to basic and acidic residues. The interval 653–686 (EKRRVEEEKRKKKEEAARRKQEQEAAKLAKMKIP) is disordered. Position 746 is a phosphoserine (Ser-746).

Belongs to the class-I aminoacyl-tRNA synthetase family. As to quaternary structure, homodimer. The cofactor is Zn(2+).

Its subcellular location is the cytoplasm. It catalyses the reaction tRNA(Cys) + L-cysteine + ATP = L-cysteinyl-tRNA(Cys) + AMP + diphosphate. Catalyzes the ATP-dependent ligation of cysteine to tRNA(Cys). The polypeptide is Cysteine--tRNA ligase, cytoplasmic (Homo sapiens (Human)).